The primary structure comprises 492 residues: N-succinylglutamate 5-semialdehyde dehydrogenase (492 aa).

220-225 (GSANTG) lines the NAD(+) pocket. Active-site residues include Glu243 and Cys277.

Belongs to the aldehyde dehydrogenase family. AstD subfamily.

The enzyme catalyses N-succinyl-L-glutamate 5-semialdehyde + NAD(+) + H2O = N-succinyl-L-glutamate + NADH + 2 H(+). It functions in the pathway amino-acid degradation; L-arginine degradation via AST pathway; L-glutamate and succinate from L-arginine: step 4/5. In terms of biological role, catalyzes the NAD-dependent reduction of succinylglutamate semialdehyde into succinylglutamate. The protein is N-succinylglutamate 5-semialdehyde dehydrogenase of Escherichia coli O17:K52:H18 (strain UMN026 / ExPEC).